The following is a 711-amino-acid chain: Polyribonucleotide nucleotidyltransferase (711 aa).

Mg(2+)-binding residues include Asp-486 and Asp-492. The KH domain occupies 553 to 612; it reads PRIHTIKINPDKIKDVIGKGGSVIRALTEETGTTIEIEDDGTVKIAATDGEKAKHAIRRI. Residues 622–690 enclose the S1 motif domain; that stretch reads GRVYTGKVTR…RQGRIRLSIK (69 aa). The tract at residues 689–711 is disordered; that stretch reads IKEATEQSQPAAAPEAPAAEQGE. Over residues 694–711 the composition is skewed to low complexity; sequence EQSQPAAAPEAPAAEQGE.

Belongs to the polyribonucleotide nucleotidyltransferase family. In terms of assembly, component of the RNA degradosome, which is a multiprotein complex involved in RNA processing and mRNA degradation. It depends on Mg(2+) as a cofactor.

It localises to the cytoplasm. The enzyme catalyses RNA(n+1) + phosphate = RNA(n) + a ribonucleoside 5'-diphosphate. In terms of biological role, involved in mRNA degradation. Catalyzes the phosphorolysis of single-stranded polyribonucleotides processively in the 3'- to 5'-direction. The polypeptide is Polyribonucleotide nucleotidyltransferase (Escherichia coli O8 (strain IAI1)).